Here is a 423-residue protein sequence, read N- to C-terminus: Putative competence-damage inducible protein (423 aa).

It belongs to the CinA family.

The protein is Putative competence-damage inducible protein of Streptococcus equi subsp. zooepidemicus (strain H70).